A 232-amino-acid chain; its full sequence is N-acetyltransferase 8B (232 aa).

Residues 1–62 (MPRFEAQKSS…FLLLLGVPLA (62 aa)) lie on the Cytoplasmic side of the membrane. The chain crosses the membrane as a helical; Signal-anchor for type II membrane protein span at residues 63–83 (LVLVSGSWILAVICIFFLLLL). Residues 79–224 (FLLLLLRLLA…WRLVDICFIQ (146 aa)) enclose the N-acetyltransferase domain. Topologically, residues 84–232 (LRLLARQPWK…IQLNYSFPSA (149 aa)) are lumenal. N6-acetyllysine is present on lysine 109.

It belongs to the NAT8 family. In terms of processing, acetylation on Lys-109 modulates enzymatic activity. Expressed in brain (at protein level).

It localises to the endoplasmic reticulum-Golgi intermediate compartment membrane. It is found in the endoplasmic reticulum membrane. The catalysed reaction is L-lysyl-[protein] + acetyl-CoA = N(6)-acetyl-L-lysyl-[protein] + CoA + H(+). Functionally, endoplasmic reticulum (ER)-membrane-bound lysine N-acetyltransferase catalyzing the N6-acetylation of lysine residues in the lumen of the ER in various proteins, including PROM1 and BACE1, using acetyl-CoA as acetyl donor. Thereby, may regulate apoptosis through the acetylation and the regulation of the expression of PROM1. Acetylates and stabilizes BACE1 immature protein, leading to increased steady-state levels in neurons. By acting on BACE1 expression, may regulate amyloid beta-peptide formation. N(6)-lysine acetylation in ER maintains protein homeostasis and regulates reticulophagy. This chain is N-acetyltransferase 8B, found in Mus musculus (Mouse).